A 170-amino-acid chain; its full sequence is Peptide deformylase (170 aa).

Positions 94 and 136 each coordinate Fe cation. The active site involves E137. H140 contacts Fe cation.

Belongs to the polypeptide deformylase family. It depends on Fe(2+) as a cofactor.

It catalyses the reaction N-terminal N-formyl-L-methionyl-[peptide] + H2O = N-terminal L-methionyl-[peptide] + formate. Its function is as follows. Removes the formyl group from the N-terminal Met of newly synthesized proteins. Requires at least a dipeptide for an efficient rate of reaction. N-terminal L-methionine is a prerequisite for activity but the enzyme has broad specificity at other positions. In Stenotrophomonas maltophilia (strain R551-3), this protein is Peptide deformylase.